A 390-amino-acid polypeptide reads, in one-letter code: Acid protease (390 aa).

Positions 1-18 are cleaved as a signal peptide; that stretch reads MLFSKSLLLSVLASLSFA. Residues 75 to 386 form the Peptidase A1 domain; that stretch reads YLTTIEIGTP…DIDNSQVGIA (312 aa). Residues Asp93 and Asp282 contribute to the active site.

It belongs to the peptidase A1 family.

The protein is Acid protease (PEP1) of Saccharomycopsis fibuligera (Yeast).